Here is a 374-residue protein sequence, read N- to C-terminus: Ribosomal RNA large subunit methyltransferase G (374 aa).

The protein belongs to the methyltransferase superfamily. RlmG family.

It is found in the cytoplasm. The enzyme catalyses guanosine(1835) in 23S rRNA + S-adenosyl-L-methionine = N(2)-methylguanosine(1835) in 23S rRNA + S-adenosyl-L-homocysteine + H(+). Specifically methylates the guanine in position 1835 (m2G1835) of 23S rRNA. The sequence is that of Ribosomal RNA large subunit methyltransferase G from Pseudomonas aeruginosa (strain ATCC 15692 / DSM 22644 / CIP 104116 / JCM 14847 / LMG 12228 / 1C / PRS 101 / PAO1).